Reading from the N-terminus, the 603-residue chain is Phosphomethylpyrimidine synthase (603 aa).

Substrate-binding positions include Asn-224, Met-253, Tyr-282, His-318, 338–340 (SRG), 379–382 (DGLR), and Glu-418. His-422 is a Zn(2+) binding site. Tyr-445 contacts substrate. His-486 contributes to the Zn(2+) binding site. The [4Fe-4S] cluster site is built by Cys-566, Cys-569, and Cys-574.

It belongs to the ThiC family. Homodimer. Requires [4Fe-4S] cluster as cofactor.

The catalysed reaction is 5-amino-1-(5-phospho-beta-D-ribosyl)imidazole + S-adenosyl-L-methionine = 4-amino-2-methyl-5-(phosphooxymethyl)pyrimidine + CO + 5'-deoxyadenosine + formate + L-methionine + 3 H(+). It participates in cofactor biosynthesis; thiamine diphosphate biosynthesis. Functionally, catalyzes the synthesis of the hydroxymethylpyrimidine phosphate (HMP-P) moiety of thiamine from aminoimidazole ribotide (AIR) in a radical S-adenosyl-L-methionine (SAM)-dependent reaction. In Xylella fastidiosa (strain Temecula1 / ATCC 700964), this protein is Phosphomethylpyrimidine synthase.